Reading from the N-terminus, the 244-residue chain is Tyrosine recombinase XerD-like (244 aa).

The region spanning 1-73 (MRDRISAFLE…ACNQFLYFLY (73 aa)) is the Core-binding (CB) domain. The 155-residue stretch at 90–244 (AEKKTEKPEI…KTVLTLEKYR (155 aa)) folds into the Tyr recombinase domain. Catalysis depends on residues K150 and R211. Y243 serves as the catalytic O-(3'-phospho-DNA)-tyrosine intermediate.

Belongs to the 'phage' integrase family. XerD-like subfamily.

It is found in the cytoplasm. Functionally, putative tyrosine recombinase. Not involved in the cutting and rejoining of the recombining DNA molecules on dif(SL) site. In Streptococcus pneumoniae (strain CGSP14), this protein is Tyrosine recombinase XerD-like.